The chain runs to 197 residues: Small ribosomal subunit protein uS4c (197 aa).

An S4 RNA-binding domain is found at 85 to 161 (MRLDNILFRL…TGKELANHLN (77 aa)).

Belongs to the universal ribosomal protein uS4 family. In terms of assembly, part of the 30S ribosomal subunit. Contacts protein S5. The interaction surface between S4 and S5 is involved in control of translational fidelity.

It localises to the plastid. One of the primary rRNA binding proteins, it binds directly to 16S rRNA where it nucleates assembly of the body of the 30S subunit. Its function is as follows. With S5 and S12 plays an important role in translational accuracy. The sequence is that of Small ribosomal subunit protein uS4c (rps4) from Cuscuta obtusiflora (Peruvian dodder).